The sequence spans 195 residues: MAASDAHNNNKKRSNRRRKKRRTEDFSSSSESSSSSSSESDHEDLDEPEKEISKQDINIDDIDIESDNENSALTNDKGNKLIPQNLSITEKQQLSTVPFTTTSISNITNDNQIKNTPNINEISKNLDQKKTQLNNEFLKIMTTEFGDDLDELRKKPDFTEKSLVILAKTLQSGVNMFDIDVLNGLIQESGNTSNQ.

The disordered stretch occupies residues 1–61 (MAASDAHNNN…ISKQDINIDD (61 aa)). Positions 9–21 (NNKKRSNRRRKKR) are enriched in basic residues. The span at 27 to 38 (SSSSESSSSSSS) shows a compositional bias: low complexity.

Belongs to the RSA3 family. Associates with nucleolar pre-ribosomal particles.

Its subcellular location is the nucleus. The protein localises to the nucleolus. Required for efficient biogenesis of the 60S ribosomal subunit. The sequence is that of Ribosome assembly protein 3 (RSA3) from Candida albicans (strain SC5314 / ATCC MYA-2876) (Yeast).